We begin with the raw amino-acid sequence, 399 residues long: MSKIEQKNQSEVIKLAIDLMSRASVTPEDAGCQKLMAQRLAQLGFTNESMIFADTTNLWSRRDSTNATKEDDLVFCFAGHTDVVPAGNLELWNTPPFEPTIIDGMLYGRGAADMKGSLAAMIVATERFVQDHPDHHGSITYLITSDEEGPFINGTTKVIDTLEARNEKITYCIVGEPSSTHAVGDIVKNGRRGSISAEVDIKGKQGHVAYPDHVRNPIHLAMPALTELSQVQWDNGNDYFPATSFQLSNINAGTGATNVVPGHINALFNLRYSTELTDQIIVEQVESILDKHQLDYDIKWTFNGKPFITEHVESEHGFLNAVSQAILSVTGTETQLSTSGGTSDGRFIAPTGAQVIELGPCNATIHQVNESVSCDDLEKLVDIYYHCLVNVLCTHKTIS.

Histidine 80 contributes to the Zn(2+) binding site. Aspartate 82 is a catalytic residue. Aspartate 113 contributes to the Zn(2+) binding site. Catalysis depends on glutamate 147, which acts as the Proton acceptor. Zn(2+) contacts are provided by glutamate 148, glutamate 176, and histidine 366.

It belongs to the peptidase M20A family. DapE subfamily. Homodimer. Zn(2+) serves as cofactor. Requires Co(2+) as cofactor.

The enzyme catalyses N-succinyl-(2S,6S)-2,6-diaminopimelate + H2O = (2S,6S)-2,6-diaminopimelate + succinate. The protein operates within amino-acid biosynthesis; L-lysine biosynthesis via DAP pathway; LL-2,6-diaminopimelate from (S)-tetrahydrodipicolinate (succinylase route): step 3/3. Its function is as follows. Catalyzes the hydrolysis of N-succinyl-L,L-diaminopimelic acid (SDAP), forming succinate and LL-2,6-diaminopimelate (DAP), an intermediate involved in the bacterial biosynthesis of lysine and meso-diaminopimelic acid, an essential component of bacterial cell walls. This chain is Succinyl-diaminopimelate desuccinylase, found in Colwellia psychrerythraea (strain 34H / ATCC BAA-681) (Vibrio psychroerythus).